The sequence spans 317 residues: tRNA dimethylallyltransferase (317 aa).

Position 18–25 (18–25) interacts with ATP; sequence GPTATGKT. Residue 20 to 25 coordinates substrate; sequence TATGKT. Interaction with substrate tRNA regions lie at residues 43-46, 167-171, and 281-288; these read DSAL, QRIQR, and KRQITWLR.

Belongs to the IPP transferase family. In terms of assembly, monomer. The cofactor is Mg(2+).

It carries out the reaction adenosine(37) in tRNA + dimethylallyl diphosphate = N(6)-dimethylallyladenosine(37) in tRNA + diphosphate. In terms of biological role, catalyzes the transfer of a dimethylallyl group onto the adenine at position 37 in tRNAs that read codons beginning with uridine, leading to the formation of N6-(dimethylallyl)adenosine (i(6)A). The polypeptide is tRNA dimethylallyltransferase (Alkalilimnicola ehrlichii (strain ATCC BAA-1101 / DSM 17681 / MLHE-1)).